The chain runs to 63 residues: Large ribosomal subunit protein bL35 (63 aa).

The tract at residues R24 to L44 is disordered.

Belongs to the bacterial ribosomal protein bL35 family.

This Mycoplasma mycoides subsp. mycoides SC (strain CCUG 32753 / NCTC 10114 / PG1) protein is Large ribosomal subunit protein bL35.